The following is a 320-amino-acid chain: Carbonic anhydrase 6 (320 aa).

Residues 1–17 (MRALALLLALPLLGARA) form the signal peptide. Residues 21–278 (SLWTYSEGAL…LNGRVVESNF (258 aa)) enclose the Alpha-carbonic anhydrase domain. Cys42 and Cys224 form a disulfide bridge. His85 (proton donor/acceptor) is an active-site residue. His111, His113, and His138 together coordinate Zn(2+). A substrate-binding site is contributed by 220 to 221 (TT). The N-linked (GlcNAc...) asparagine glycan is linked to Asn256.

The protein belongs to the alpha-carbonic anhydrase family. Requires Zn(2+) as cofactor.

It localises to the secreted. The catalysed reaction is hydrogencarbonate + H(+) = CO2 + H2O. Reversible hydration of carbon dioxide. Its role in saliva is unknown. The protein is Carbonic anhydrase 6 (CA6) of Canis lupus familiaris (Dog).